Consider the following 341-residue polypeptide: Phosphate acyltransferase (341 aa).

The protein belongs to the PlsX family. In terms of assembly, homodimer. Probably interacts with PlsY.

The protein resides in the cytoplasm. It carries out the reaction a fatty acyl-[ACP] + phosphate = an acyl phosphate + holo-[ACP]. Its pathway is lipid metabolism; phospholipid metabolism. Catalyzes the reversible formation of acyl-phosphate (acyl-PO(4)) from acyl-[acyl-carrier-protein] (acyl-ACP). This enzyme utilizes acyl-ACP as fatty acyl donor, but not acyl-CoA. In Ehrlichia ruminantium (strain Gardel), this protein is Phosphate acyltransferase.